A 76-amino-acid polypeptide reads, in one-letter code: uncharacterized protein (76 aa).

This is an uncharacterized protein from Mycobacterium tuberculosis (strain ATCC 25618 / H37Rv).